The chain runs to 163 residues: Type II secretion system protein M (163 aa).

The Cytoplasmic portion of the chain corresponds to 1-19; that stretch reads MMDKLQGWWRSISAREQRL. Residues 20–40 traverse the membrane as a helical segment; sequence VAVGGSCLLIGFCYWIVWQPI. Residues 41-163 lie on the Periplasmic side of the membrane; it reads ANRIAERERQ…VRRLQLSRPQ (123 aa).

It belongs to the GSP M family. In terms of assembly, type II secretion system is composed of four main components: the outer membrane complex, the inner membrane complex, the cytoplasmic secretion ATPase and the periplasm-spanning pseudopilus. Forms homodimers. Interacts with ExeL/GspL. Interacts with ExeE/GspE and ExeF/GspF.

The protein localises to the cell inner membrane. In terms of biological role, inner membrane component of the type II secretion system required for the energy-dependent secretion of extracellular factors such as proteases and toxins from the periplasm. Plays a role in the complex assembly and recruits ExeL resulting in a stable complex in the inner membrane. Provides thus a link between the energy-providing ExeE protein in the cytoplasm and the rest of the T2SS machinery. The polypeptide is Type II secretion system protein M (exeM) (Aeromonas hydrophila).